The primary structure comprises 535 residues: Ankyrin repeat domain-containing protein 34C (535 aa).

ANK repeat units follow at residues 10–39 (TDGN…YINE), 43–80 (KGET…DPNI), 84–114 (SGKT…DPSL), and 118–147 (TGAS…AKGK). Disordered stretches follow at residues 159–181 (SGTK…DRHS) and 214–237 (AGHP…RKVS). Residues 216 to 225 (HPSSCNTSKA) are compositionally biased toward polar residues. Residue Ser301 is modified to Phosphoserine. The tract at residues 381-444 (DLDIQPGPDP…RRRPPHLLER (64 aa)) is disordered. A Phosphoserine modification is found at Ser447.

The protein belongs to the ANKRD34 family.

This Homo sapiens (Human) protein is Ankyrin repeat domain-containing protein 34C (ANKRD34C).